The following is a 125-amino-acid chain: Large ribosomal subunit protein bL19 (125 aa).

It belongs to the bacterial ribosomal protein bL19 family.

Its function is as follows. This protein is located at the 30S-50S ribosomal subunit interface and may play a role in the structure and function of the aminoacyl-tRNA binding site. This is Large ribosomal subunit protein bL19 from Wolbachia sp. subsp. Brugia malayi (strain TRS).